Here is a 220-residue protein sequence, read N- to C-terminus: Uracil-DNA glycosylase (220 aa).

Residue Asp-60 is the Proton acceptor of the active site.

Belongs to the uracil-DNA glycosylase (UDG) superfamily. UNG family.

The protein localises to the cytoplasm. It carries out the reaction Hydrolyzes single-stranded DNA or mismatched double-stranded DNA and polynucleotides, releasing free uracil.. Excises uracil residues from the DNA which can arise as a result of misincorporation of dUMP residues by DNA polymerase or due to deamination of cytosine. The chain is Uracil-DNA glycosylase from Francisella tularensis subsp. novicida (strain U112).